The sequence spans 292 residues: UPF0696 protein C11orf68 (292 aa).

The span at 1–11 shows a compositional bias: low complexity; the sequence is MAAAAAAAVAG. The interval 1–60 is disordered; that stretch reads MAAAAAAAVAGVGRGGGGAEPRQERSRARGWAGVERSEGRRMEPGEELEEEGSPGGREDG. Residue arginine 29 is modified to Omega-N-methylarginine. A compositionally biased stretch (basic and acidic residues) spans 35 to 44; the sequence is ERSEGRRMEP.

It belongs to the UPF0696 family.

The sequence is that of UPF0696 protein C11orf68 (C11orf68) from Homo sapiens (Human).